We begin with the raw amino-acid sequence, 276 residues long: Tryptase beta-2 (276 aa).

Residues M1 to S21 form the signal peptide. The propeptide at A22–G31 is activation peptide. Positions I32–P273 constitute a Peptidase S1 domain. A disulfide bridge connects residues C60 and C76. The active-site Charge relay system is H75. Y98 carries the phosphotyrosine modification. The active-site Charge relay system is the D122. Residue N133 is glycosylated (N-linked (GlcNAc...) asparagine). 3 disulfides stabilise this stretch: C156/C231, C189/C212, and C221/C249. The active-site Charge relay system is S225.

Belongs to the peptidase S1 family. Tryptase subfamily. In terms of assembly, homotetramer. The active tetramer is converted to inactive monomers at neutral and acidic pH in the absence of heparin. Low concentrations of inactive monomers become active monomers at pH 6.0 in the presence of heparin. When the concentration of active monomers is higher, they convert to active monomers and then to active tetramers. These monomers are active and functionally distinct from the tetrameric enzyme. In contrast to the hidden active sites in the tetrameric form, the active site of the monomeric form is accessible for macromolecular proteins and inhibitors, e.g. fibrinogen which is a substrate for the monomeric but not for the tetrameric form. The monomeric form forms a complex with SERPINB6. During embryogenesis, detected primarily in skin.

The protein localises to the secreted. It carries out the reaction Preferential cleavage: Arg-|-Xaa, Lys-|-Xaa, but with more restricted specificity than trypsin.. Tryptase is the major neutral protease present in mast cells and is secreted upon the coupled activation-degranulation response of this cell type. Plays a role in innate immunity. This is Tryptase beta-2 (Tpsb2) from Mus musculus (Mouse).